A 257-amino-acid polypeptide reads, in one-letter code: NAD-capped RNA hydrolase NudC (257 aa).

Residues Lys25 and Arg69 each contribute to the substrate site. The Zn(2+) site is built by Cys98 and Cys101. Glu111 is a substrate binding site. Zn(2+) contacts are provided by Cys116 and Cys119. Position 124 (Tyr124) interacts with substrate. A Nudix hydrolase domain is found at 125–248; the sequence is PQIAPCIIVA…TVARRLIEDT (124 aa). A divalent metal cation is bound by residues Ala158, Glu174, and Glu178. Positions 159-180 match the Nudix box motif; that stretch reads GFVEVGETLEQAVAREVMEESG. Residue 192-199 participates in substrate binding; that stretch reads QPWPFPQS. Glu219 is an a divalent metal cation binding site. Ala241 provides a ligand contact to substrate.

It belongs to the Nudix hydrolase family. NudC subfamily. In terms of assembly, homodimer. Requires Mg(2+) as cofactor. Mn(2+) is required as a cofactor. The cofactor is Zn(2+).

It catalyses the reaction a 5'-end NAD(+)-phospho-ribonucleoside in mRNA + H2O = a 5'-end phospho-adenosine-phospho-ribonucleoside in mRNA + beta-nicotinamide D-ribonucleotide + 2 H(+). The catalysed reaction is NAD(+) + H2O = beta-nicotinamide D-ribonucleotide + AMP + 2 H(+). It carries out the reaction NADH + H2O = reduced beta-nicotinamide D-ribonucleotide + AMP + 2 H(+). Functionally, mRNA decapping enzyme that specifically removes the nicotinamide adenine dinucleotide (NAD) cap from a subset of mRNAs by hydrolyzing the diphosphate linkage to produce nicotinamide mononucleotide (NMN) and 5' monophosphate mRNA. The NAD-cap is present at the 5'-end of some mRNAs and stabilizes RNA against 5'-processing. Has preference for mRNAs with a 5'-end purine. Catalyzes the hydrolysis of a broad range of dinucleotide pyrophosphates. The polypeptide is NAD-capped RNA hydrolase NudC (Shigella flexneri serotype 5b (strain 8401)).